Here is a 199-residue protein sequence, read N- to C-terminus: UPF0462 protein C4orf33 (199 aa).

The protein belongs to the UPF0462 family.

In Homo sapiens (Human), this protein is UPF0462 protein C4orf33 (C4orf33).